The following is a 270-amino-acid chain: Phosphatidylglycerol--prolipoprotein diacylglyceryl transferase (270 aa).

A run of 7 helical transmembrane segments spans residues 10-30 (VAVA…LVGI), 56-76 (LIFW…VLFY), 92-112 (WKGG…AWWF), 120-140 (FFQL…AGRI), 175-195 (SQLY…NLYA), 202-222 (MAVS…VEFV), and 237-257 (VTMG…LIWL). Arginine 139 is an a 1,2-diacyl-sn-glycero-3-phospho-(1'-sn-glycerol) binding site.

This sequence belongs to the Lgt family.

Its subcellular location is the cell inner membrane. The enzyme catalyses L-cysteinyl-[prolipoprotein] + a 1,2-diacyl-sn-glycero-3-phospho-(1'-sn-glycerol) = an S-1,2-diacyl-sn-glyceryl-L-cysteinyl-[prolipoprotein] + sn-glycerol 1-phosphate + H(+). Its pathway is protein modification; lipoprotein biosynthesis (diacylglyceryl transfer). In terms of biological role, catalyzes the transfer of the diacylglyceryl group from phosphatidylglycerol to the sulfhydryl group of the N-terminal cysteine of a prolipoprotein, the first step in the formation of mature lipoproteins. This is Phosphatidylglycerol--prolipoprotein diacylglyceryl transferase from Pseudomonas syringae pv. syringae (strain B728a).